A 155-amino-acid polypeptide reads, in one-letter code: Ribonuclease H (155 aa).

The RNase H type-1 domain maps to 1–146 (MPELFAYTDG…ADELARAGMK (146 aa)). D9, E52, D74, and D138 together coordinate Mg(2+).

Belongs to the RNase H family. Monomer. Mg(2+) is required as a cofactor.

Its subcellular location is the cytoplasm. The enzyme catalyses Endonucleolytic cleavage to 5'-phosphomonoester.. Its function is as follows. Endonuclease that specifically degrades the RNA of RNA-DNA hybrids. In Ruegeria pomeroyi (strain ATCC 700808 / DSM 15171 / DSS-3) (Silicibacter pomeroyi), this protein is Ribonuclease H.